Here is a 753-residue protein sequence, read N- to C-terminus: Inactive protein-tyrosine phosphatase egg-5 (753 aa).

Disordered regions lie at residues 26–46 (TSLQ…STDN) and 77–116 (RKKV…YAAP). Low complexity predominate over residues 35 to 46 (NTDDSSADSTDN). The span at 84-94 (AQKDRRSKERL) shows a compositional bias: basic and acidic residues. Residues 408 to 661 (MERRFEILEN…IFVHRLVAFF (254 aa)) enclose the Tyrosine-protein phosphatase domain.

It belongs to the protein-tyrosine phosphatase family. As to quaternary structure, part of a complex, consisting of pseudophosphatases egg-3, egg-4, egg-5 and kinase mbk-2; this complex is required for the oocyte-to-zygote transition. Interacts (via tyrosine-protein phosphatase domain) with kinase mbk-2 (via 'Tyr-619' and 'Tyr-621'); mbk-2 tyrosine phosphorylation enhances the interaction.

It localises to the cytoplasm. The protein resides in the cell cortex. Functionally, inactive phosphatase which acts redundantly with egg-4 in the oocyte-to-zygote transition. Required for polarized cortical actin cytoskeleton rearrangement in the oocyte before and after fertilization. Together with egg-4, required for the cortical localization of kinase mbk-2 in maturing oocyte until the end of meiosis I. Also required for kinase mbk-2, pseudophosphatase egg-3 and chitin synthase chs-1 localization to cytoplasmic foci after fertilization. The polypeptide is Inactive protein-tyrosine phosphatase egg-5 (Caenorhabditis elegans).